A 239-amino-acid polypeptide reads, in one-letter code: Protein UL20 homolog (239 aa).

Transmembrane regions (helical) follow at residues 65-81 (PSFS…ALVI), 140-156 (FVIG…FMVV), and 189-208 (LMPL…STAV).

The protein belongs to the alphaherpesvirinae UL20 family. Interacts with gK (via N-terminus); this interaction plays a role in the coordinate transport of UL20 and gK to the trans-Golgi network (TGN), and is required for their cell surface expression. Interacts with gB.

It localises to the virion. It is found in the host cell membrane. The protein resides in the host endosome membrane. The protein localises to the host Golgi apparatus membrane. Its subcellular location is the host nucleus membrane. In terms of biological role, plays an essential role in egress of virus particles from the nucleus, cytoplasmic envelopment and virus-induced cell fusion. Forms a functional protein complex with gK and this interaction is absolutely essential for their coordinate intracellular transport, gK glycosylation, expression on host cell surface, and function. Together, they modulate gB-mediated virus-induced cell fusion and virion egress and therefore actively participate in these processes. In Equus caballus (Horse), this protein is Protein UL20 homolog.